The following is a 338-amino-acid chain: Anthranilate phosphoribosyltransferase (338 aa).

Residues G80, 83-84 (GD), T88, 90-93 (NIST), 108-116 (KHGNRAMSS), and S120 each bind 5-phospho-alpha-D-ribose 1-diphosphate. G80 is an anthranilate binding site. S92 serves as a coordination point for Mg(2+). N111 is a binding site for anthranilate. R166 lines the anthranilate pocket. Mg(2+)-binding residues include D225 and E226.

It belongs to the anthranilate phosphoribosyltransferase family. Homodimer. It depends on Mg(2+) as a cofactor.

It carries out the reaction N-(5-phospho-beta-D-ribosyl)anthranilate + diphosphate = 5-phospho-alpha-D-ribose 1-diphosphate + anthranilate. It participates in amino-acid biosynthesis; L-tryptophan biosynthesis; L-tryptophan from chorismate: step 2/5. In terms of biological role, catalyzes the transfer of the phosphoribosyl group of 5-phosphorylribose-1-pyrophosphate (PRPP) to anthranilate to yield N-(5'-phosphoribosyl)-anthranilate (PRA). The protein is Anthranilate phosphoribosyltransferase of Herpetosiphon aurantiacus (strain ATCC 23779 / DSM 785 / 114-95).